A 118-amino-acid polypeptide reads, in one-letter code: V-type proton ATPase subunit G 3 (118 aa).

Positions 3 to 54 (SQSQGIQQLLQAEKRAKDKLEEAKKRKNKRLRQAKEEATADIDQYRLKREAD) form a coiled coil. The segment at 19 to 39 (KDKLEEAKKRKNKRLRQAKEE) is disordered.

It belongs to the V-ATPase G subunit family. In terms of assembly, V-ATPase is a heteromultimeric enzyme made up of two complexes: the ATP-hydrolytic V1 complex and the proton translocation V0 complex. The V1 complex consists of three catalytic AB heterodimers that form a heterohexamer, three peripheral stalks each consisting of EG heterodimers, one central rotor including subunits D and F, and the regulatory subunits C and H. The proton translocation complex V0 consists of the proton transport subunit a, a ring of proteolipid subunits c9c'', rotary subunit d, subunits e and f, and two accessory subunits.

Subunit of the V1 complex of vacuolar(H+)-ATPase (V-ATPase), a multisubunit enzyme composed of a peripheral complex (V1) that hydrolyzes ATP and a membrane integral complex (V0) that translocates protons. V-ATPase is responsible for acidifying and maintaining the pH of intracellular compartments and in some cell types, is targeted to the plasma membrane, where it is responsible for acidifying the extracellular environment. The chain is V-type proton ATPase subunit G 3 (atp6v1g3) from Xenopus laevis (African clawed frog).